Reading from the N-terminus, the 281-residue chain is CCAAT/enhancer-binding protein epsilon (281 aa).

The disordered stretch occupies residues 1-30; sequence MSHGTYYECEPRGGQQPLEFSGGRAGPGEL. Lys121 is covalently cross-linked (Glycyl lysine isopeptide (Lys-Gly) (interchain with G-Cter in SUMO2)). A Phosphoserine modification is found at Ser181. The bZIP domain maps to 204–267; sequence SLEYRLRRER…DTLRNLFRQI (64 aa). Residues 208–228 form a basic motif region; that stretch reads RLRRERNNIAVRKSRDKAKRR. Positions 230–237 are leucine-zipper; that stretch reads LETQQKVL.

Belongs to the bZIP family. C/EBP subfamily. In terms of assembly, binds DNA as a homodimer and as a heterodimer. Can form stable heterodimers with CEBPA, CEBPB and CEBPD. Interacts with GATA1 and SPI1. Interacts with SMARCD2. Post-translationally, phosphorylated. In terms of tissue distribution, strongest expression occurs in promyelocyte and late-myeloblast-like cell lines.

It localises to the nucleus. In terms of biological role, transcriptional activator. C/EBP are DNA-binding proteins that recognize two different motifs: the CCAAT homology common to many promoters and the enhanced core homology common to many enhancers. Required for the promyelocyte-myelocyte transition in myeloid differentiation. The chain is CCAAT/enhancer-binding protein epsilon (CEBPE) from Homo sapiens (Human).